Reading from the N-terminus, the 300-residue chain is LysM and putative peptidoglycan-binding domain-containing protein 3 (300 aa).

Residues 1-216 (MAGRNQNRTA…PYYGADWGMG (216 aa)) lie on the Extracellular side of the membrane. N-linked (GlcNAc...) asparagine glycosylation is found at asparagine 7 and asparagine 26. Serine 55 carries the post-translational modification Phosphoserine. A LysM domain is found at 65–109 (LTKDIQEGDTLNAVALQYCCTVADIKRVNNLISDQDFFALRSIKI). Positions 136–157 (PYFQEQDTVPANDSPSSSESAG) are disordered. Polar residues predominate over residues 140–156 (EQDTVPANDSPSSSESA). Asparagine 199 carries N-linked (GlcNAc...) asparagine glycosylation. The helical transmembrane segment at 217–237 (WWTAVVIMLIVGIITPVFYLL) threads the bilayer. Over 238–300 (YYEILAKVDV…LYRQDPQARD (63 aa)) the chain is Cytoplasmic. The disordered stretch occupies residues 253-300 (VDSSHLHPGLTPPSHHREMGNAIGPTKGIPVGQQDDHRLYRQDPQARD). Positions 286–300 (QDDHRLYRQDPQARD) are enriched in basic and acidic residues.

The protein resides in the cell membrane. Its subcellular location is the golgi apparatus. Functionally, essential for Golgi structural integrity. The sequence is that of LysM and putative peptidoglycan-binding domain-containing protein 3 (Lysmd3) from Rattus norvegicus (Rat).